Consider the following 811-residue polypeptide: Lon protease 1 (811 aa).

The 198-residue stretch at 15-212 (LPVLSLRDTV…SLALHLYRQI (198 aa)) folds into the Lon N-terminal domain. Residue 376 to 383 (GPPGTGKT) coordinates ATP. The Lon proteolytic domain maps to 613-794 (YDQPGVATGM…DEALARCLRL (182 aa)). Active-site residues include Ser700 and Lys743.

This sequence belongs to the peptidase S16 family. In terms of assembly, homohexamer. Organized in a ring with a central cavity.

The protein localises to the cytoplasm. It carries out the reaction Hydrolysis of proteins in presence of ATP.. Its function is as follows. ATP-dependent serine protease that mediates the selective degradation of mutant and abnormal proteins as well as certain short-lived regulatory proteins. Required for cellular homeostasis and for survival from DNA damage and developmental changes induced by stress. Degrades polypeptides processively to yield small peptide fragments that are 5 to 10 amino acids long. Binds to DNA in a double-stranded, site-specific manner. This chain is Lon protease 1, found in Sorangium cellulosum (strain So ce56) (Polyangium cellulosum (strain So ce56)).